Consider the following 829-residue polypeptide: Cadherin-16 (829 aa).

Residues 1–18 (MVPAWLWLLCFSVPQALV) form the signal peptide. The Extracellular segment spans residues 19–786 (EVSPTTLHVE…MKGMPTKLSA (768 aa)). 6 consecutive Cadherin domains span residues 25–126 (LHVE…VPQF), 131–235 (YSAR…SIVE), 242–336 (EPVH…APVC), 341–449 (PPVS…APEF), 455–564 (GPVS…PPRL), and 569–665 (YEAD…APAL). Residues asparagine 517, asparagine 602, and asparagine 722 are each glycosylated (N-linked (GlcNAc...) asparagine). The segment at 666 to 786 (PLAPMPSRHL…MKGMPTKLSA (121 aa)) is ectodomain G. Residues 787-807 (VGILVGTLAAIGFFLILIFTH) form a helical membrane-spanning segment. Over 808 to 829 (LALARKKDLDAPADNVPLKAAA) the chain is Cytoplasmic.

Kidney specific. Limited to the basolateral membranes of renal tubular epithelial cells.

It is found in the cell membrane. In terms of biological role, cadherins are calcium-dependent cell adhesion proteins. They preferentially interact with themselves in a homophilic manner in connecting cells; cadherins may thus contribute to the sorting of heterogeneous cell types. This is Cadherin-16 (CDH16) from Oryctolagus cuniculus (Rabbit).